The chain runs to 169 residues: Crossover junction endodeoxyribonuclease RuvC (169 aa).

Catalysis depends on residues Asp11, Glu71, and Asp143. Mg(2+) is bound by residues Asp11, Glu71, and Asp143.

The protein belongs to the RuvC family. Homodimer which binds Holliday junction (HJ) DNA. The HJ becomes 2-fold symmetrical on binding to RuvC with unstacked arms; it has a different conformation from HJ DNA in complex with RuvA. In the full resolvosome a probable DNA-RuvA(4)-RuvB(12)-RuvC(2) complex forms which resolves the HJ. It depends on Mg(2+) as a cofactor.

Its subcellular location is the cytoplasm. The catalysed reaction is Endonucleolytic cleavage at a junction such as a reciprocal single-stranded crossover between two homologous DNA duplexes (Holliday junction).. The RuvA-RuvB-RuvC complex processes Holliday junction (HJ) DNA during genetic recombination and DNA repair. Endonuclease that resolves HJ intermediates. Cleaves cruciform DNA by making single-stranded nicks across the HJ at symmetrical positions within the homologous arms, yielding a 5'-phosphate and a 3'-hydroxyl group; requires a central core of homology in the junction. The consensus cleavage sequence is 5'-(A/T)TT(C/G)-3'. Cleavage occurs on the 3'-side of the TT dinucleotide at the point of strand exchange. HJ branch migration catalyzed by RuvA-RuvB allows RuvC to scan DNA until it finds its consensus sequence, where it cleaves and resolves the cruciform DNA. The sequence is that of Crossover junction endodeoxyribonuclease RuvC from Bartonella henselae (strain ATCC 49882 / DSM 28221 / CCUG 30454 / Houston 1) (Rochalimaea henselae).